The primary structure comprises 299 residues: Acetylglutamate kinase (299 aa).

Substrate-binding positions include 70 to 71, Arg92, and Asn186; that span reads GG.

Belongs to the acetylglutamate kinase family. ArgB subfamily.

Its subcellular location is the cytoplasm. The enzyme catalyses N-acetyl-L-glutamate + ATP = N-acetyl-L-glutamyl 5-phosphate + ADP. It functions in the pathway amino-acid biosynthesis; L-arginine biosynthesis; N(2)-acetyl-L-ornithine from L-glutamate: step 2/4. Catalyzes the ATP-dependent phosphorylation of N-acetyl-L-glutamate. This is Acetylglutamate kinase from Thermoanaerobacter pseudethanolicus (strain ATCC 33223 / 39E) (Clostridium thermohydrosulfuricum).